The following is a 525-amino-acid chain: Chromosomal replication initiator protein DnaA (525 aa).

Residues 1–71 (MNDFWQHCSA…SDLAREFWNT (71 aa)) are domain I, interacts with DnaA modulators. The interval 71 to 188 (TPIEVQFVLD…GEADSMYERS (118 aa)) is domain II. Positions 162–182 (AGRRTWRPGPGAAPANGGEAD) are disordered. A compositionally biased stretch (low complexity) spans 169–181 (PGPGAAPANGGEA). Positions 189–405 (KLNPVLTFDN…GALRKILAYS (217 aa)) are domain III, AAA+ region. The ATP site is built by Gly233, Gly235, Lys236, and Thr237. Residues 406–525 (KFHGREISIE…LHVLEQTLKG (120 aa)) form a domain IV, binds dsDNA region.

It belongs to the DnaA family. In terms of assembly, oligomerizes as a right-handed, spiral filament on DNA at oriC.

It is found in the cytoplasm. Functionally, plays an essential role in the initiation and regulation of chromosomal replication. ATP-DnaA binds to the origin of replication (oriC) to initiate formation of the DNA replication initiation complex once per cell cycle. Binds the DnaA box (a 9 base pair repeat at the origin) and separates the double-stranded (ds)DNA. Forms a right-handed helical filament on oriC DNA; dsDNA binds to the exterior of the filament while single-stranded (ss)DNA is stabiized in the filament's interior. The ATP-DnaA-oriC complex binds and stabilizes one strand of the AT-rich DNA unwinding element (DUE), permitting loading of DNA polymerase. After initiation quickly degrades to an ADP-DnaA complex that is not apt for DNA replication. Binds acidic phospholipids. This Burkholderia cenocepacia (strain HI2424) protein is Chromosomal replication initiator protein DnaA.